Reading from the N-terminus, the 233-residue chain is Esterase FUS5 (233 aa).

Residues Ser-105, Asp-159, and His-187 each act as charge relay system in the active site.

The protein belongs to the LovG family.

Functionally, esterase; part of the gene cluster that mediates the biosynthesis of the mycotoxin fusarin C. Within the cluster, FUS1, FUS2, FUS8 and FUS9 are sufficient for fusarin production. The other FUS cluster members are not essential for fusarin C biosynthesis. The polypeptide is Esterase FUS5 (Gibberella fujikuroi (strain CBS 195.34 / IMI 58289 / NRRL A-6831) (Bakanae and foot rot disease fungus)).